Here is a 371-residue protein sequence, read N- to C-terminus: Putative glutamate--cysteine ligase 2 (371 aa).

It belongs to the glutamate--cysteine ligase type 2 family. YbdK subfamily.

It carries out the reaction L-cysteine + L-glutamate + ATP = gamma-L-glutamyl-L-cysteine + ADP + phosphate + H(+). In terms of biological role, ATP-dependent carboxylate-amine ligase which exhibits weak glutamate--cysteine ligase activity. In Burkholderia thailandensis (strain ATCC 700388 / DSM 13276 / CCUG 48851 / CIP 106301 / E264), this protein is Putative glutamate--cysteine ligase 2.